Here is a 308-residue protein sequence, read N- to C-terminus: D-alanine--D-alanine ligase (308 aa).

The 198-residue stretch at 105–302 folds into the ATP-grasp domain; the sequence is KAIFRSLGLA…FPDLCERILD (198 aa). An ATP-binding site is contributed by 133–188; the sequence is DLPFGLPCVVKPAGEGSSVGVHLVNEAAELGPACRDAASHAGDVIVERYVKGTEVD. Residues Asp-256, Glu-269, and Asn-271 each coordinate Mg(2+).

The protein belongs to the D-alanine--D-alanine ligase family. Mg(2+) is required as a cofactor. The cofactor is Mn(2+).

It localises to the cytoplasm. It catalyses the reaction 2 D-alanine + ATP = D-alanyl-D-alanine + ADP + phosphate + H(+). It participates in cell wall biogenesis; peptidoglycan biosynthesis. In terms of biological role, cell wall formation. The sequence is that of D-alanine--D-alanine ligase from Anaeromyxobacter sp. (strain K).